We begin with the raw amino-acid sequence, 741 residues long: Phosphoribosylformylglycinamidine synthase subunit PurL (741 aa).

Residue histidine 54 is part of the active site. Positions 57 and 96 each coordinate ATP. Glutamate 98 lines the Mg(2+) pocket. Substrate contacts are provided by residues 99–102 (SHNH) and arginine 121. Histidine 100 (proton acceptor) is an active-site residue. Mg(2+) is bound at residue aspartate 122. Glutamine 245 is a binding site for substrate. Aspartate 273 contributes to the Mg(2+) binding site. Substrate is bound at residue 317 to 319 (ESQ). ATP-binding residues include aspartate 500 and glycine 537. A Mg(2+)-binding site is contributed by asparagine 538. Serine 540 is a binding site for substrate.

The protein belongs to the FGAMS family. As to quaternary structure, monomer. Part of the FGAM synthase complex composed of 1 PurL, 1 PurQ and 2 PurS subunits.

It is found in the cytoplasm. It carries out the reaction N(2)-formyl-N(1)-(5-phospho-beta-D-ribosyl)glycinamide + L-glutamine + ATP + H2O = 2-formamido-N(1)-(5-O-phospho-beta-D-ribosyl)acetamidine + L-glutamate + ADP + phosphate + H(+). Its pathway is purine metabolism; IMP biosynthesis via de novo pathway; 5-amino-1-(5-phospho-D-ribosyl)imidazole from N(2)-formyl-N(1)-(5-phospho-D-ribosyl)glycinamide: step 1/2. Part of the phosphoribosylformylglycinamidine synthase complex involved in the purines biosynthetic pathway. Catalyzes the ATP-dependent conversion of formylglycinamide ribonucleotide (FGAR) and glutamine to yield formylglycinamidine ribonucleotide (FGAM) and glutamate. The FGAM synthase complex is composed of three subunits. PurQ produces an ammonia molecule by converting glutamine to glutamate. PurL transfers the ammonia molecule to FGAR to form FGAM in an ATP-dependent manner. PurS interacts with PurQ and PurL and is thought to assist in the transfer of the ammonia molecule from PurQ to PurL. In Shouchella clausii (strain KSM-K16) (Alkalihalobacillus clausii), this protein is Phosphoribosylformylglycinamidine synthase subunit PurL.